A 144-amino-acid chain; its full sequence is MSFLQKFRKFAMRGNVVDLAVGIIIGAAFGKIVSSLVANVIMPQLGLLIGGIDFKQFSWVLKPAQGDTPAVVMKYGIFLQNIFDFIIVAFAVFCIIKLINRNASQRGGKTRRAVQTECGRDAAYRDPRSLETTKQRHGAGYNDD.

2 helical membrane-spanning segments follow: residues 21–41 (VGIIIGAAFGKIVSSLVANVI) and 76–96 (GIFLQNIFDFIIVAFAVFCII). The interval 105–144 (QRGGKTRRAVQTECGRDAAYRDPRSLETTKQRHGAGYNDD) is disordered. Residues 118 to 134 (CGRDAAYRDPRSLETTK) are compositionally biased toward basic and acidic residues.

The protein belongs to the MscL family. In terms of assembly, homopentamer.

The protein resides in the cell inner membrane. Functionally, channel that opens in response to stretch forces in the membrane lipid bilayer. May participate in the regulation of osmotic pressure changes within the cell. In Sodalis glossinidius (strain morsitans), this protein is Large-conductance mechanosensitive channel.